Reading from the N-terminus, the 214-residue chain is MDRTIADLRKDYTLEALSEVEVDTNPFRQFKRWFEQALAAQLPEPNAMTIATSTPDGQPSARMVLLKDFDERGFVFFTNYNSRKGQELAENPQAALVFWWAELERQVRISGRVEKVSESESDYYFYSRPANSRLGAWVSNQSEIIASREVLEQRMQEFQHKYENQEIPRPSHWGGLRVIPSQIEFWQGRSSRLHDRLLYTLLNDDSWEIHRLSP.

Residues 9–12 (RKDY) and Lys67 each bind substrate. Residues 62–67 (RMVLLK), 77–78 (FT), Arg83, Lys84, and Gln106 contribute to the FMN site. Residues Tyr124, Arg128, and Ser132 each contribute to the substrate site. FMN-binding positions include 141 to 142 (QS) and Trp186. 192–194 (RLH) contributes to the substrate binding site. Arg196 is an FMN binding site.

It belongs to the pyridoxamine 5'-phosphate oxidase family. As to quaternary structure, homodimer. The cofactor is FMN.

The enzyme catalyses pyridoxamine 5'-phosphate + O2 + H2O = pyridoxal 5'-phosphate + H2O2 + NH4(+). It carries out the reaction pyridoxine 5'-phosphate + O2 = pyridoxal 5'-phosphate + H2O2. Its pathway is cofactor metabolism; pyridoxal 5'-phosphate salvage; pyridoxal 5'-phosphate from pyridoxamine 5'-phosphate: step 1/1. The protein operates within cofactor metabolism; pyridoxal 5'-phosphate salvage; pyridoxal 5'-phosphate from pyridoxine 5'-phosphate: step 1/1. Functionally, catalyzes the oxidation of either pyridoxine 5'-phosphate (PNP) or pyridoxamine 5'-phosphate (PMP) into pyridoxal 5'-phosphate (PLP). This Trichormus variabilis (strain ATCC 29413 / PCC 7937) (Anabaena variabilis) protein is Pyridoxine/pyridoxamine 5'-phosphate oxidase.